Reading from the N-terminus, the 434-residue chain is Serine--tRNA ligase (434 aa).

241–243 (TAE) is a binding site for L-serine. Position 272-274 (272-274 (RSE)) interacts with ATP. Glutamate 295 is a binding site for L-serine. ATP is bound at residue 359–362 (EISS). Serine 395 is a binding site for L-serine.

It belongs to the class-II aminoacyl-tRNA synthetase family. Type-1 seryl-tRNA synthetase subfamily. As to quaternary structure, homodimer. The tRNA molecule binds across the dimer.

The protein resides in the cytoplasm. The enzyme catalyses tRNA(Ser) + L-serine + ATP = L-seryl-tRNA(Ser) + AMP + diphosphate + H(+). The catalysed reaction is tRNA(Sec) + L-serine + ATP = L-seryl-tRNA(Sec) + AMP + diphosphate + H(+). It functions in the pathway aminoacyl-tRNA biosynthesis; selenocysteinyl-tRNA(Sec) biosynthesis; L-seryl-tRNA(Sec) from L-serine and tRNA(Sec): step 1/1. Functionally, catalyzes the attachment of serine to tRNA(Ser). Is also able to aminoacylate tRNA(Sec) with serine, to form the misacylated tRNA L-seryl-tRNA(Sec), which will be further converted into selenocysteinyl-tRNA(Sec). This Glaesserella parasuis serovar 5 (strain SH0165) (Haemophilus parasuis) protein is Serine--tRNA ligase.